The primary structure comprises 205 residues: ATP phosphoribosyltransferase (205 aa).

It belongs to the ATP phosphoribosyltransferase family. Short subfamily. Heteromultimer composed of HisG and HisZ subunits.

The protein localises to the cytoplasm. The enzyme catalyses 1-(5-phospho-beta-D-ribosyl)-ATP + diphosphate = 5-phospho-alpha-D-ribose 1-diphosphate + ATP. The protein operates within amino-acid biosynthesis; L-histidine biosynthesis; L-histidine from 5-phospho-alpha-D-ribose 1-diphosphate: step 1/9. In terms of biological role, catalyzes the condensation of ATP and 5-phosphoribose 1-diphosphate to form N'-(5'-phosphoribosyl)-ATP (PR-ATP). Has a crucial role in the pathway because the rate of histidine biosynthesis seems to be controlled primarily by regulation of HisG enzymatic activity. The sequence is that of ATP phosphoribosyltransferase from Leptospira interrogans serogroup Icterohaemorrhagiae serovar Lai (strain 56601).